We begin with the raw amino-acid sequence, 875 residues long: Importin subunit beta-1 (875 aa).

An N-acetylmethionine modification is found at Met1. HEAT repeat units follow at residues 2–31, 33–64, 84–122, 128–159, and 169–201; these read ELIT…AAVE, LPTF…IRLL, ANAR…EIPV, LIPQ…ICQD, and SNEI…LNSL. The residue at position 12 (Ser12) is a Phosphoserine. Positions 21 to 100 constitute an Importin N-terminal domain; the sequence is AQKFLERAAV…KNYVLQTLGT (80 aa). Lys210 bears the N6-acetyllysine mark. HEAT repeat units lie at residues 211 to 246, 252 to 301, 313 to 359, 363 to 393, 401 to 437, 448 to 484, 499 to 536, 543 to 591, 599 to 638, 643 to 680, 685 to 723, 731 to 775, 785 to 828, and 830 to 872; these read ESER…IMSL, ETYM…EAAE, YAKG…TCCE, VPHV…GSIL, LKPL…ICEL, LAPL…YEAA, SSSF…EIVK, YPAV…QNVL, ALQI…VEVL, LKYM…CRAL, LPFC…TLAI, LEVV…VQGL, DVML…CTAF, and KDVL…RKLK. Residues 285–461 are essential for high affinity interaction with RPL23A; the sequence is VCDEEMDLAI…LQCLIEGLSA (177 aa). Residues 328-341 are IAB-binding; it reads TLTKQDENDDDDDW. The segment at 333 to 418 is ran-GTP binding; sequence DENDDDDDWN…MPTLIELMKD (86 aa). N6-acetyllysine is present on residues Lys834 and Lys866.

It belongs to the importin beta family. Importin beta-1 subfamily. As to quaternary structure, forms a complex with an importin alpha subunit. Interacts with XPO1. Forms a heterodimer with IPO7. The KPNB1/IPO7 heterodimer interacts with H1 histone. Interacts with SNUPN. Interacts with H2A, H2B, H3 and H4 histones. Component of an import snRNP complex composed of KPNB1, SNUPN, SMN1 and ZNF259. Component of a nuclear export receptor complex composed of KPNB1, Ran, SNUPN and XPO1. Interacts with SRY. Interacts with PRKCI/atypical protein kinase C iota. Interacts with KPNA2. Interacts with KPNA7. Interacts with SNAI1 (via zinc fingers) and SNAI2 (via zinc fingers). Interacts with SLC35G1 and STIM1. Interacts with DCAF8. Interacts with RAN. Interacts with NUMA1 (via C-terminus); this interaction is inhibited by RanGTP. Interacts with ZBED1/hDREF; required for nuclear import of ZBED1/hDREF. Interacts with SRP19. Interacts with RPL23A (via BIB domain), RPS7 and RPL5. Post-translationally, mono-ADP-ribosylated by PARP16.

Its subcellular location is the cytoplasm. It localises to the nucleus envelope. In terms of biological role, functions in nuclear protein import, either in association with an adapter protein, like an importin-alpha subunit, which binds to nuclear localization signals (NLS) in cargo substrates, or by acting as autonomous nuclear transport receptor. Acting autonomously, serves itself as NLS receptor. Docking of the importin/substrate complex to the nuclear pore complex (NPC) is mediated by KPNB1 through binding to nucleoporin FxFG repeats and the complex is subsequently translocated through the pore by an energy requiring, Ran-dependent mechanism. At the nucleoplasmic side of the NPC, Ran binds to importin-beta and the three components separate and importin-alpha and -beta are re-exported from the nucleus to the cytoplasm where GTP hydrolysis releases Ran from importin. The directionality of nuclear import is thought to be conferred by an asymmetric distribution of the GTP- and GDP-bound forms of Ran between the cytoplasm and nucleus. Mediates autonomously the nuclear import of ribosomal proteins RPL23A, RPS7 and RPL5. In association with IPO7, mediates the nuclear import of H1 histone. In vitro, mediates nuclear import of H2A, H2B, H3 and H4 histones. Imports MRTFA, SNAI1 and PRKCI into the nucleus. The protein is Importin subunit beta-1 (Kpnb1) of Rattus norvegicus (Rat).